A 97-amino-acid chain; its full sequence is Peptide YY (97 aa).

The N-terminal stretch at 1-28 is a signal peptide; it reads MMSGRRSWPAMATVLLTLLVCLGELVDA. S41 carries the post-translational modification Phosphoserine. F64 carries the post-translational modification Phenylalanine amide. Positions 68–97 are excised as a propeptide; sequence DFSEALLSILLFPDREDPPVKSRPEGAYLW.

It belongs to the NPY family.

The protein resides in the secreted. Its function is as follows. This gut peptide inhibits exocrine pancreatic secretion, has a vasoconstrictory action and inhibitis jejunal and colonic mobility. The sequence is that of Peptide YY (PYY) from Bos taurus (Bovine).